The primary structure comprises 204 residues: Large ribosomal subunit protein eL15 (204 aa).

It belongs to the eukaryotic ribosomal protein eL15 family. Component of the large ribosomal subunit.

It is found in the cytoplasm. Functionally, component of the large ribosomal subunit. The ribosome is a large ribonucleoprotein complex responsible for the synthesis of proteins in the cell. The protein is Large ribosomal subunit protein eL15 (rpl15) of Carassius auratus (Goldfish).